Consider the following 896-residue polypeptide: Microsomal triglyceride transfer protein large subunit (896 aa).

An N-terminal signal peptide occupies residues 1-21; sequence MILLAVLFLCFFSSYSASVKG. The Vitellogenin domain occupies 28–659; it reads LNNERLYKLT…IFQYIGKAEL (632 aa). Cys-174 and Cys-194 form a disulfide bridge.

In terms of assembly, heterodimer; heterodimerizes with the protein disulfide isomerase (P4HB/PDI). Interacts with APOB. Interacts with PRAP1.

It is found in the endoplasmic reticulum. The protein resides in the golgi apparatus. The enzyme catalyses a 1,2-diacyl-sn-glycero-3-phosphocholine(in) = a 1,2-diacyl-sn-glycero-3-phosphocholine(out). It carries out the reaction a 1,2-diacyl-sn-glycero-3-phosphoethanolamine(in) = a 1,2-diacyl-sn-glycero-3-phosphoethanolamine(out). The catalysed reaction is a cholesterol ester(in) = a cholesterol ester(out). It catalyses the reaction a triacyl-sn-glycerol(in) = a triacyl-sn-glycerol(out). Functionally, catalyzes the transport of triglyceride, cholesteryl ester, and phospholipid between phospholipid surfaces. Required for the assembly and secretion of plasma lipoproteins that contain apolipoprotein B. May be involved in regulating cholesteryl ester biosynthesis in cells that produce lipoproteins. This Rattus norvegicus (Rat) protein is Microsomal triglyceride transfer protein large subunit (Mttp).